We begin with the raw amino-acid sequence, 465 residues long: ATP synthase subunit beta (465 aa).

148–155 is a binding site for ATP; it reads GGAGVGKT.

It belongs to the ATPase alpha/beta chains family. As to quaternary structure, F-type ATPases have 2 components, CF(1) - the catalytic core - and CF(0) - the membrane proton channel. CF(1) has five subunits: alpha(3), beta(3), gamma(1), delta(1), epsilon(1). CF(0) has three main subunits: a(1), b(2) and c(9-12). The alpha and beta chains form an alternating ring which encloses part of the gamma chain. CF(1) is attached to CF(0) by a central stalk formed by the gamma and epsilon chains, while a peripheral stalk is formed by the delta and b chains.

Its subcellular location is the cell inner membrane. It carries out the reaction ATP + H2O + 4 H(+)(in) = ADP + phosphate + 5 H(+)(out). In terms of biological role, produces ATP from ADP in the presence of a proton gradient across the membrane. The catalytic sites are hosted primarily by the beta subunits. This chain is ATP synthase subunit beta, found in Neisseria gonorrhoeae (strain ATCC 700825 / FA 1090).